The chain runs to 694 residues: Methionine--tRNA ligase (694 aa).

The 'HIGH' region motif lies at 12 to 22 (PYANGPLHLGH). Zn(2+) is bound by residues cysteine 143, cysteine 146, cysteine 156, and cysteine 159. The short motif at 330-334 (KMSKS) is the 'KMSKS' region element. Residue lysine 333 participates in ATP binding. A disordered region spans residues 550 to 577 (LAAPATPATASKPAPAKADAKPAAAANP). The segment covering 551 to 575 (AAPATPATASKPAPAKADAKPAAAA) has biased composition (low complexity). Positions 591 to 694 (DFAKLDLRIG…SGAQPGMPVR (104 aa)) constitute a tRNA-binding domain.

The protein belongs to the class-I aminoacyl-tRNA synthetase family. MetG type 1 subfamily. Homodimer. Requires Zn(2+) as cofactor.

Its subcellular location is the cytoplasm. The catalysed reaction is tRNA(Met) + L-methionine + ATP = L-methionyl-tRNA(Met) + AMP + diphosphate. Functionally, is required not only for elongation of protein synthesis but also for the initiation of all mRNA translation through initiator tRNA(fMet) aminoacylation. The polypeptide is Methionine--tRNA ligase (Xanthomonas axonopodis pv. citri (strain 306)).